Reading from the N-terminus, the 766-residue chain is DENN domain-containing protein 1B (766 aa).

The uDENN domain maps to 14-143 (DLVLKVKCHA…YNHPVPKANT (130 aa)). In terms of domain architecture, cDENN spans 160 to 296 (GLPTIPESRN…VVSALKNKLK (137 aa)). The region spanning 298–375 (QSTATGDGVA…DGRLAKLNAG (78 aa)) is the dDENN domain. The FXDXF motif motif lies at 378–382 (FSDIF). The segment at 472–523 (NEKGENREKHKLSQTHLKRPHKSLDGTLYDDDDDDDDIERASKISSEDGEET) is disordered. The segment covering 480 to 492 (KHKLSQTHLKRPH) has biased composition (basic residues). Acidic residues predominate over residues 499–509 (LYDDDDDDDDI). Tyr500 is subject to Phosphotyrosine. Ser516, Ser517, Ser530, and Ser533 each carry phosphoserine. Positions 547-556 (DLLGEILDTL) match the Clathrin box motif. 2 disordered regions span residues 611 to 634 (LGQD…VSSG) and 652 to 732 (LCAD…KPSK). Ser632 and Ser633 each carry phosphoserine. The segment covering 694–704 (TPGQAPLQSED) has biased composition (polar residues). The span at 722–732 (KAGKEDTKPSK) shows a compositional bias: basic and acidic residues.

As to quaternary structure, interacts with RAB35. Interacts with clathrin heavy chain/CLTC. Interacts with components of the adapter protein complex 2 (AP-2) AP2A2 and AP2B1. Interacts with CD3E. Post-translationally, phosphorylated on serine and/or threonine, possibly regulating the guanine nucleotide exchange factor (GEF) activity. In terms of tissue distribution, expressed in a subset of dendritic cells (DCs).

It localises to the cytoplasm. Its subcellular location is the cytosol. It is found in the cytoplasmic vesicle. The protein localises to the clathrin-coated vesicle. In terms of biological role, guanine nucleotide exchange factor (GEF) for RAB35 that acts as a regulator of T-cell receptor (TCR) internalization in TH2 cells. Acts by promoting the exchange of GDP to GTP, converting inactive GDP-bound RAB35 into its active GTP-bound form. Plays a role in clathrin-mediated endocytosis. Controls cytokine production in TH2 lymphocytes by controlling the rate of TCR internalization and routing to endosomes: acts by mediating clathrin-mediated endocytosis of TCR via its interaction with the adapter protein complex 2 (AP-2) and GEF activity. Dysregulation leads to impaired TCR down-modulation and recycling, affecting cytokine production in TH2 cells. The polypeptide is DENN domain-containing protein 1B (Mus musculus (Mouse)).